The following is a 134-amino-acid chain: MAEVIGYYGTGRRKTAVARVYLRPGEGKVKVNGKEYESLNDYFKNPAWTKHAIEPLEVTNTLGKFDLVIRVNGGGLSGQSGAVRLGIARALLQYDQNLRPVLKKYKMLTRDPREVERKKYGLKKARRAPQFSKR.

The segment at 114–134 is disordered; it reads EVERKKYGLKKARRAPQFSKR. Residues 120-134 are compositionally biased toward basic residues; it reads YGLKKARRAPQFSKR.

It belongs to the universal ribosomal protein uS9 family.

The protein is Small ribosomal subunit protein uS9 of Thermotoga sp. (strain RQ2).